A 60-amino-acid polypeptide reads, in one-letter code: Short neurotoxin C (60 aa).

Disulfide bonds link C3–C22, C17–C39, C41–C52, and C53–C58.

The protein belongs to the three-finger toxin family. Short-chain subfamily. Type I alpha-neurotoxin sub-subfamily. In terms of tissue distribution, expressed by the venom gland.

Its subcellular location is the secreted. Binds to muscle nicotinic acetylcholine receptor (nAChR) and inhibit acetylcholine from binding to the receptor, thereby impairing neuromuscular transmission. This Aipysurus laevis (Olive sea snake) protein is Short neurotoxin C.